Consider the following 227-residue polypeptide: Phosphoribosylformylglycinamidine synthase subunit PurQ (227 aa).

The Glutamine amidotransferase type-1 domain maps to 2–226 (KFAVIQFPGS…VKAWKEEQVN (225 aa)). Cys-86 acts as the Nucleophile in catalysis. Active-site residues include His-195 and Glu-197.

In terms of assembly, part of the FGAM synthase complex composed of 1 PurL, 1 PurQ and 2 PurS subunits.

Its subcellular location is the cytoplasm. The enzyme catalyses N(2)-formyl-N(1)-(5-phospho-beta-D-ribosyl)glycinamide + L-glutamine + ATP + H2O = 2-formamido-N(1)-(5-O-phospho-beta-D-ribosyl)acetamidine + L-glutamate + ADP + phosphate + H(+). It catalyses the reaction L-glutamine + H2O = L-glutamate + NH4(+). It functions in the pathway purine metabolism; IMP biosynthesis via de novo pathway; 5-amino-1-(5-phospho-D-ribosyl)imidazole from N(2)-formyl-N(1)-(5-phospho-D-ribosyl)glycinamide: step 1/2. In terms of biological role, part of the phosphoribosylformylglycinamidine synthase complex involved in the purines biosynthetic pathway. Catalyzes the ATP-dependent conversion of formylglycinamide ribonucleotide (FGAR) and glutamine to yield formylglycinamidine ribonucleotide (FGAM) and glutamate. The FGAM synthase complex is composed of three subunits. PurQ produces an ammonia molecule by converting glutamine to glutamate. PurL transfers the ammonia molecule to FGAR to form FGAM in an ATP-dependent manner. PurS interacts with PurQ and PurL and is thought to assist in the transfer of the ammonia molecule from PurQ to PurL. The protein is Phosphoribosylformylglycinamidine synthase subunit PurQ of Listeria monocytogenes serotype 4a (strain HCC23).